We begin with the raw amino-acid sequence, 891 residues long: Tubulin polyglutamylase TTLL6 (891 aa).

Disordered stretches follow at residues 1 to 25 (MGALLLHPSRRGPAGVVASWTSSPA) and 44 to 106 (SQAR…KRKK). The span at 63–76 (SEEKGDSSKEDPKE) shows a compositional bias: basic and acidic residues. Residues 88–99 (GAQNGLQNAQQQ) show a composition bias toward low complexity. The TTL domain maps to 106-449 (KKRLVINLSS…ESCDKKKVLE (344 aa)). ATP-binding positions include lysine 223, 229 to 230 (QG), 251 to 254 (QLYI), and 264 to 266 (KFD). Position 229 (glutamine 229) interacts with a protein. Arginine 290 serves as a coordination point for L-glutamate. 312–313 (TN) lines the ATP pocket. L-glutamate is bound by residues tyrosine 314, serine 315, and lysine 332. Mg(2+)-binding residues include aspartate 395, glutamate 408, and asparagine 410. Histidine 411 is an a protein binding site. Positions 420–499 (RLDKEVKDGL…CGGFRLIYPS (80 aa)) are c-MTBD region. Lysine 426 serves as a coordination point for L-glutamate. Disordered stretches follow at residues 546–584 (QMKKKVEMQGESAGEQVRKKGMRGWQQKQQQKDKAATQA), 607–636 (GERKNETDSSLNQEAPTEEASSVFPKLTSA), 687–711 (TTPESTTQLSISPKSPPTLAVTASS), and 800–820 (NNLSQNPSLPGECHSRSDSSG). Over residues 687 to 699 (TTPESTTQLSISP) the composition is skewed to polar residues.

It belongs to the tubulin--tyrosine ligase family. In terms of assembly, found in a complex with CEP41. Requires Mg(2+) as cofactor.

It is found in the cytoplasm. The protein localises to the cytoskeleton. The protein resides in the cilium axoneme. It localises to the cilium basal body. It carries out the reaction L-glutamyl-[protein] + L-glutamate + ATP = gamma-L-glutamyl-L-glutamyl-[protein] + ADP + phosphate + H(+). The catalysed reaction is (L-glutamyl)(n)-gamma-L-glutamyl-L-glutamyl-[protein] + L-glutamate + ATP = (L-glutamyl)(n+1)-gamma-L-glutamyl-L-glutamyl-[protein] + ADP + phosphate + H(+). Polyglutamylase which modifies both tubulin and non-tubulin proteins, generating alpha-linked polyglutamate side chains on the gamma-carboxyl group of specific glutamate residues of target proteins. Preferentially mediates ATP-dependent long polyglutamate chain elongation over the initiation step of the polyglutamylation reaction. Preferentially modifies the alpha-tubulin tail over a beta-tail. Promotes tubulin polyglutamylation which stimulates spastin/SPAST-mediated microtubule severing, thereby regulating microtubule functions. Mediates microtubule polyglutamylation in primary cilia axoneme, which is important for ciliary structural formation and motility. Mediates microtubule polyglutamylation in motile cilia, necessary for the regulation of ciliary coordinated beating. Polyglutamylates non-tubulin protein nucleotidyltransferase CGAS, leading to CGAS DNA-binding inhibition, thereby preventing antiviral defense response. In Homo sapiens (Human), this protein is Tubulin polyglutamylase TTLL6.